A 266-amino-acid polypeptide reads, in one-letter code: L-aspartate dehydrogenase (266 aa).

Ala-123 and Asn-189 together coordinate NAD(+). His-219 is a catalytic residue.

It belongs to the L-aspartate dehydrogenase family.

The catalysed reaction is L-aspartate + NADP(+) + H2O = oxaloacetate + NH4(+) + NADPH + H(+). It carries out the reaction L-aspartate + NAD(+) + H2O = oxaloacetate + NH4(+) + NADH + H(+). It participates in cofactor biosynthesis; NAD(+) biosynthesis; iminoaspartate from L-aspartate (dehydrogenase route): step 1/1. Its function is as follows. Specifically catalyzes the NAD or NADP-dependent dehydrogenation of L-aspartate to iminoaspartate. This Cupriavidus taiwanensis (strain DSM 17343 / BCRC 17206 / CCUG 44338 / CIP 107171 / LMG 19424 / R1) (Ralstonia taiwanensis (strain LMG 19424)) protein is L-aspartate dehydrogenase.